The primary structure comprises 429 residues: Probable proton-coupled zinc antiporter SLC30A4 (429 aa).

At 1–113 the chain is on the cytoplasmic side; it reads MAGSGAWKRL…ILKQRKVKAR (113 aa). Residues 114-134 form a helical membrane-spanning segment; the sequence is LTIAAVLYLLFMIGELVGGYI. The Lumenal segment spans residues 135-143; that stretch reads ANSLAIMTD. A helical transmembrane segment spans residues 144-164; it reads ALHMLTDLSAIILTLLALWLS. Zn(2+)-binding residues include H146 and D150. Over 165 to 178 the chain is Cytoplasmic; that stretch reads SKSPTKRFTFGFHR. A helical transmembrane segment spans residues 179 to 199; the sequence is LEVLSAMISVLLVYILMGFLL. Residues 200–216 are Lumenal-facing; it reads YEAVQRTIHMNYEINGD. Residues 217 to 237 form a helical membrane-spanning segment; sequence IMLITAAVGVAVNVIMGFLLN. Over 238–274 the chain is Cytoplasmic; that stretch reads QSGHRHSHSHSLPSNSPTRGSGCERNHGQDSLAVRAA. Residues 240 to 264 form a zinc binding region; the sequence is GHRHSHSHSLPSNSPTRGSGCERNH. The helical transmembrane segment at 275–295 threads the bilayer; that stretch reads FVHALGDLVQSVGVLIAAYII. Zn(2+)-binding residues include H277 and D281. The Lumenal portion of the chain corresponds to 296 to 310; the sequence is RFKPEYKIADPICTY. Residues 311-331 traverse the membrane as a helical segment; sequence VFSLLVAFTTFRIIWDTVVII. Topologically, residues 332 to 429 are cytoplasmic; that stretch reads LEGVPSHLNV…TCANCQSSSP (98 aa).

The protein belongs to the cation diffusion facilitator (CDF) transporter (TC 2.A.4) family. SLC30A subfamily. Homodimer; dityrosine-linked. Homodimerization could be specific of the human protein and enhances the zinc transport efficiency. Interacts with TMEM163. Post-translationally, homodimerization through dityrosine bonds is stimulated by oxidative stress.

Its subcellular location is the endosome membrane. It is found in the late endosome membrane. It localises to the lysosome membrane. The enzyme catalyses Zn(2+)(in) + 2 H(+)(out) = Zn(2+)(out) + 2 H(+)(in). In terms of biological role, probable proton-coupled zinc ion antiporter mediating zinc import from cytoplasm potentially into the endocytic compartment. Controls zinc deposition in milk. In Homo sapiens (Human), this protein is Probable proton-coupled zinc antiporter SLC30A4.